Reading from the N-terminus, the 498-residue chain is Glycerol kinase (498 aa).

Position 11 (T11) interacts with ADP. Residues T11, T12, and S13 each contribute to the ATP site. Residue T11 coordinates sn-glycerol 3-phosphate. Position 15 (R15) interacts with ADP. The sn-glycerol 3-phosphate site is built by R81, E82, Y133, and D242. Residues R81, E82, Y133, D242, and Q243 each contribute to the glycerol site. ADP contacts are provided by T264 and G307. ATP-binding residues include T264, G307, Q311, and G411. G411 contributes to the ADP binding site.

This sequence belongs to the FGGY kinase family.

The enzyme catalyses glycerol + ATP = sn-glycerol 3-phosphate + ADP + H(+). It participates in polyol metabolism; glycerol degradation via glycerol kinase pathway; sn-glycerol 3-phosphate from glycerol: step 1/1. Inhibited by fructose 1,6-bisphosphate (FBP). Key enzyme in the regulation of glycerol uptake and metabolism. Catalyzes the phosphorylation of glycerol to yield sn-glycerol 3-phosphate. The protein is Glycerol kinase of Afipia carboxidovorans (strain ATCC 49405 / DSM 1227 / KCTC 32145 / OM5) (Oligotropha carboxidovorans).